The sequence spans 206 residues: Pyridoxine/pyridoxamine 5'-phosphate oxidase (206 aa).

Residues 53 to 58 (RMVLLK), 68 to 69 (YT), lysine 75, and glutamine 97 contribute to the FMN site. Lysine 58 provides a ligand contact to substrate. Substrate is bound by residues tyrosine 115, arginine 119, and serine 123. FMN contacts are provided by residues 132–133 (QS) and tryptophan 177. 183–185 (RLH) serves as a coordination point for substrate. An FMN-binding site is contributed by arginine 187.

This sequence belongs to the pyridoxamine 5'-phosphate oxidase family. As to quaternary structure, homodimer. FMN is required as a cofactor.

The enzyme catalyses pyridoxamine 5'-phosphate + O2 + H2O = pyridoxal 5'-phosphate + H2O2 + NH4(+). It carries out the reaction pyridoxine 5'-phosphate + O2 = pyridoxal 5'-phosphate + H2O2. It participates in cofactor metabolism; pyridoxal 5'-phosphate salvage; pyridoxal 5'-phosphate from pyridoxamine 5'-phosphate: step 1/1. Its pathway is cofactor metabolism; pyridoxal 5'-phosphate salvage; pyridoxal 5'-phosphate from pyridoxine 5'-phosphate: step 1/1. Its function is as follows. Catalyzes the oxidation of either pyridoxine 5'-phosphate (PNP) or pyridoxamine 5'-phosphate (PMP) into pyridoxal 5'-phosphate (PLP). This is Pyridoxine/pyridoxamine 5'-phosphate oxidase from Rhizobium leguminosarum bv. trifolii (strain WSM2304).